A 756-amino-acid polypeptide reads, in one-letter code: MSDLVATSPSPSSAPRSATDFFSDPYDSHPLWFKPSLFLSPNFDSESYISELRTFVPFDTLRSELRSHLASLNRELVDLINRDYADFVNLSTKLVDIDAAVVRMRAPLLELREKITGFRGSVEAALFALRNGLQQRSDAAAAREVLELLLDTFHVVSKVEKLIKVLPSTPSDWQNEDANSMGRSSMNDENSTQQDGTTMRETQSMLLERIASEMNRLKFYMAHAQNLPFIENMEKRIQSASVLLDASLGHCFIDGLNNSDTSVLYNCLRAYAAIDNTNAAEEIFRTTIVAPFIQKIITHETTTNAAGTSEDELENDYKQIKHFIAKDCKMLLEISSTDKSGLHVFDFLANSILKEVLWAIQKVKPGAFSPGRPTEFLKNYKASLDFLAYLEGYCPSRSAVTKFRAEAICVEFMKQWNVGVYFSLRFQEIAGALDSALTSPSLVFIQDSDKESSLNLILRQSDTLLECLRSCWKEDVLVFSAADKFLRLTLQLLSRYSFWVSSALNNRKSNASPSPGCEWAVSATAEDFVYVIHDVNCLVSEVCGDYLGHISQYLSSSSTEVLDVVRISIEQGGVSLEKVLPLLTKTIIDVIVDKSVEDLRQLRGITATFRMTNKPLPVRHSPYVVGLLRPVKAFLEGDKARNYLTQKTKEELLHGSVSEITRRYYELAADVVSVARKTQSSLQKLRQNAQRRGGAASGVSDQNVSETDKMCMQLFLDIQEYGRNVSALGLKPADIPEYCSFWQCVAPADRQNSISV.

Residues 62–82 (RSELRSHLASLNRELVDLINR) are a coiled coil. The disordered stretch occupies residues 173-199 (WQNEDANSMGRSSMNDENSTQQDGTTM).

The protein belongs to the COG2 family. As to quaternary structure, homodimer. Component of the conserved oligomeric Golgi complex which is composed of eight different subunits and is required for normal Golgi morphology and localization. Binds to COG3 and COG4. Interacts with FPP3/VETH1 and FPP2/VETH2; this interaction promotes the association between cortical microtubules and EXO70A1. Binds to SEC15B, and, possibly, with EXO70A1, SEC3A and SEC10A.

Its subcellular location is the golgi apparatus membrane. Its function is as follows. Required for normal Golgi morphology and function. Ensures, when in complex with FPP3/VETH1 and FPP2/VETH2, the correct secondary cell wall (SCW) deposition pattern by recruiting exocyst components to cortical microtubules in xylem cells during secondary cell wall deposition. The protein is Conserved oligomeric Golgi complex subunit 2 of Arabidopsis thaliana (Mouse-ear cress).